The primary structure comprises 3291 residues: Protocadherin-16 (3291 aa).

Positions 1–35 are cleaved as a signal peptide; it reads MQEELSVALSCPGMKSLGTLLPLLVLLGTTVPGIR. The Extracellular portion of the chain corresponds to 36 to 2933; the sequence is GQAGSLDLQI…PDLNLLLVGA (2898 aa). Cadherin domains are found at residues 37–137, 138–249, 250–356, 369–466, 476–572, 573–679, 680–784, 785–888, 889–994, 995–1105, 1100–1205, 1218–1317, 1326–1429, 1430–1539, 1539–1642, 1643–1744, 1745–1848, 1849–1953, 1976–2061, 2062–2164, 2165–2270, 2270–2369, 2370–2475, 2476–2595, 2596–2699, 2700–2806, and 2807–2926; these read QAGS…APAF, PQAR…APAF, NQSR…QPSM, VSEA…APAF, LPEV…EPQF, QRTF…PPQF, YPRE…PPIF, EQLQ…SPAF, PAPE…APRF, DSPT…EPTF, SEEP…SPTF, IQVP…SPDL, VPVV…APAF, ARDP…APVF, FASP…APAF, PQQE…SPTF, GNTH…APAF, PVPS…APAF, LATL…GPRF, PRAN…APRF, LQPH…RPTI, IPQP…VPIF, SQSL…APSF, TLPH…PPVF, TRAS…GPAF, PLSL…DPVF, and LAPS…APDL. N-linked (GlcNAc...) asparagine glycosylation occurs at Asn396. The disordered stretch occupies residues 951-971; that stretch reads GPPGGPPHELEVEAQDGGSPP. Residue Asn1711 is glycosylated (N-linked (GlcNAc...) asparagine). Residue Asn2354 is glycosylated (N-linked (GlcNAc...) asparagine). The N-linked (GlcNAc...) asparagine glycan is linked to Asn2562. The helical transmembrane segment at 2934-2954 threads the bilayer; the sequence is VAASLGVVVVLALAALVLGLV. Residues 2955-3291 lie on the Cytoplasmic side of the membrane; it reads RARSRKAEAA…EPPDDTELRI (337 aa). The segment at 2978–3033 is disordered; sequence SLQKLGREPPSPPPSEHLYHQTLPSYGGPGAGGPYPRGGSLDPSHSSGRGSAEAAE. The segment covering 3004 to 3013 has biased composition (gly residues); it reads GGPGAGGPYP. At Ser3048 the chain carries Phosphoserine. Disordered stretches follow at residues 3051–3080 and 3226–3291; these read SSLA…PAPD and ASHR…ELRI. Residues 3237–3259 are compositionally biased toward low complexity; it reads SLSSAAMSPSFSPSLSPLAARSP. Polar residues predominate over residues 3270–3279; sequence PSASALSTES.

As to quaternary structure, heterophilic interaction with FAT4; this interaction affects their respective protein levels.

Its subcellular location is the cell membrane. Functionally, calcium-dependent cell-adhesion protein. Mediates functions in neuroprogenitor cell proliferation and differentiation. The chain is Protocadherin-16 (Dchs1) from Rattus norvegicus (Rat).